A 703-amino-acid chain; its full sequence is MKRFFNEACDINTPDKSGVNENKLCFPPLKVVCQAPETTVKGQVANTNKHNVYSTKNSMYLLGFEEILNTVLDCEPHIFTDDELRVIENFKALDSDERYLFVRLFMRKRNKWFRVGHLTYPDCKDVIACCKQLVLKNFFEDESLMSTEEIIEILSLDELRSLARQTKVCGKSRSEISKEIIFLSKRQSVLHCNGQQFLSFDAFGVMHKQESFLRKQLLYQCKSCVKPKKILVDLFHRINIVYFRSSIYDEQSLTSLILARLNKFSYPNYVLSRTSNVFNCRAQCLEYVEVLELSKNLVPIFENTAASDKEALEQALNSFFEIYPIWSTYLNEDIREFWVEENRKVDTRLVRFSFSFRPGAVYTYLIHKSLNILAKSRLVEVEHEILDTLLSQNIYLVGKRGHWYNRKALLEYNFKTEDTNVLRYWKTLALSTCENGIEDKYTHLRYYFSLQRRLVRLRKCLKVSNTTELKSMKLINNNPSRLFLHGERIHNGDLSNRTVWRSKTNNAITVEELALQHYQSIGWEGIHAESSILLTLFALTFWDILFEDVPGVFQSPFQSAPLDLHTDSFYISRESTIMKRLEEIRNGKAGLIIKDNYIREHQRKTFCVGLNWSYTCEMLLEIVDCINDNGLAQIFLALTQDYKNSSSGIPDLCLWNPSKKKFMFSEVKSDNDRLSEAQKFWISLLISSEVDVEVCHVSMHKKK.

Positions 529, 651, 666, and 667 each coordinate Mn(2+). The VRR-NUC domain occupies 597 to 698 (YIREHQRKTF…EVDVEVCHVS (102 aa)).

Belongs to the FAN1 family. It depends on Mn(2+) as a cofactor. Mg(2+) is required as a cofactor.

Its subcellular location is the nucleus. It carries out the reaction Hydrolytically removes 5'-nucleotides successively from the 3'-hydroxy termini of 3'-hydroxy-terminated oligonucleotides.. Nuclease required for the repair of DNA interstrand cross-links (ICL). Acts as a 5'-3' exonuclease that anchors at a cut end of DNA and cleaves DNA successively at every third nucleotide, allowing to excise an ICL from one strand through flanking incisions. The polypeptide is Fanconi-associated nuclease 1 homolog (Schizosaccharomyces pombe (strain 972 / ATCC 24843) (Fission yeast)).